Reading from the N-terminus, the 134-residue chain is Interleukin-5 (134 aa).

The signal sequence occupies residues 1–19 (MRMLLHLSLLALGAAYVYA). Thr22 carries an O-linked (GalNAc...) threonine glycan. N-linked (GlcNAc...) asparagine glycans are attached at residues Asn47 and Asn90.

It belongs to the IL-5 family. In terms of assembly, homodimer; disulfide-linked. Interacts with IL5RA. Interacts with CSF2RB.

The protein localises to the secreted. Functionally, homodimeric cytokine expressed predominantly by T-lymphocytes and NK cells that plays an important role in the survival, differentiation, and chemotaxis of eosinophils. Also acts on activated and resting B-cells to induce immunoglobulin production, growth, and differentiation. Mechanistically, exerts its biological effects through a receptor composed of IL5RA subunit and the cytokine receptor common subunit beta/CSF2RB. Binding to the receptor leads to activation of various kinases including LYN, SYK and JAK2 and thereby propagates signals through the RAS-MAPK and JAK-STAT5 pathways respectively. The sequence is that of Interleukin-5 (IL5) from Macaca mulatta (Rhesus macaque).